We begin with the raw amino-acid sequence, 898 residues long: Netrin receptor UNC5A (898 aa).

The signal sequence occupies residues Met-1–Ala-25. Over Gln-26–Leu-361 the chain is Extracellular. The region spanning Pro-44–Tyr-141 is the Ig-like domain. 3 disulfide bridges follow: Cys-65–Cys-126, Cys-77–Cys-124, and Cys-170–Cys-221. 2 N-linked (GlcNAc...) asparagine glycosylation sites follow: Asn-107 and Asn-218. The Ig-like C2-type domain occupies Pro-155–Ile-238. TSP type-1 domains lie at Asn-242–Pro-296 and Asp-298–Leu-350. C-linked (Man) tryptophan glycans are attached at residues Trp-245, Trp-248, and Trp-251. Disulfide bonds link Cys-254/Cys-291, Cys-258/Cys-295, and Cys-269/Cys-281. Residues Trp-301 and Trp-304 are each glycosylated (C-linked (Man) tryptophan). 3 disulfide bridges follow: Cys-310/Cys-344, Cys-314/Cys-349, and Cys-322/Cys-334. The N-linked (GlcNAc...) asparagine glycan is linked to Asn-343. The chain crosses the membrane as a helical span at residues Tyr-362–Ile-382. Over Tyr-383–Cys-898 the chain is Cytoplasmic. The 144-residue stretch at Asn-497–Ala-640 folds into the ZU5 domain. Residues Ser-661–Lys-679 are interaction with DCC. The region spanning Gln-817–Glu-897 is the Death domain.

The protein belongs to the unc-5 family. As to quaternary structure, homodimer and homooligomer. Interacts with the cytoplasmic part of DCC. Interacts with MAGED1. Interacts with PRKCABP, possibly mediating some interaction with PKC. Interacts (via extracellular domain) with FLRT2 (via extracellular domain). Interacts (via extracellular domain) with FLRT3 (via extracellular domain). In terms of processing, phosphorylated on cytoplasmic tyrosine residues. Phosphorylated by PKC in vitro. Proteolytically cleaved by caspases during apoptosis. The cleavage does not take place when the receptor is associated with netrin ligand. Its cleavage by caspases is required to induce apoptosis. Post-translationally, the two extracellular TSRs of UNC5A contain WxxWxxWxxC motifs that can be C-mannosylated on all tryptophans. DPY19L1 preferentially mannosylates the first two tryptophans and DPY19L3 prefers the third. C-mannosylation by DPY19L1 is required for transport of UNC5A from the endoplasmic reticulum to the cell surface. Mainly expressed in regions of differentiating neurons. Expressed at early stages of neural tube development in the ventral spinal cord. In developing hindbrain, it colocalizes with a number of cranial motor neuron subpopulations from embryonic E11 to E14, while DCC is expressed by motor neurons at E12. Also expressed in non-neural structures, such as the basal plane of the hindbrain and midbrain, in the developing hypothalamus, thalamus and in the pallidum.

The protein resides in the cell membrane. The protein localises to the membrane raft. It is found in the cell projection. It localises to the neuron projection. Functionally, receptor for netrin required for axon guidance. Functions in the netrin signaling pathway and promotes neurite outgrowth in response to NTN1. Mediates axon repulsion of neuronal growth cones in the developing nervous system in response to netrin. Axon repulsion in growth cones may be mediated by its association with DCC that may trigger signaling for repulsion. It also acts as a dependence receptor required for apoptosis induction when not associated with netrin ligand. The sequence is that of Netrin receptor UNC5A (Unc5a) from Rattus norvegicus (Rat).